A 119-amino-acid chain; its full sequence is Large ribosomal subunit protein bL19 (119 aa).

This sequence belongs to the bacterial ribosomal protein bL19 family.

Functionally, this protein is located at the 30S-50S ribosomal subunit interface and may play a role in the structure and function of the aminoacyl-tRNA binding site. This chain is Large ribosomal subunit protein bL19 (rplS), found in Mycoplasma pneumoniae (strain ATCC 29342 / M129 / Subtype 1) (Mycoplasmoides pneumoniae).